The primary structure comprises 210 residues: Imidazoleglycerol-phosphate dehydratase (210 aa).

The protein belongs to the imidazoleglycerol-phosphate dehydratase family.

The protein resides in the cytoplasm. The enzyme catalyses D-erythro-1-(imidazol-4-yl)glycerol 3-phosphate = 3-(imidazol-4-yl)-2-oxopropyl phosphate + H2O. It functions in the pathway amino-acid biosynthesis; L-histidine biosynthesis; L-histidine from 5-phospho-alpha-D-ribose 1-diphosphate: step 6/9. This Mycobacterium leprae (strain Br4923) protein is Imidazoleglycerol-phosphate dehydratase.